Here is a 544-residue protein sequence, read N- to C-terminus: Ceramide glucosyltransferase (544 aa).

Topologically, residues 1–15 (MVQEELSLFRITTGY) are lumenal. Residues 16–36 (FFLLWYIIILVAAYSGFFEIL) traverse the membrane as a helical segment. Residues 37–427 (FNFRNRPILH…LATLIEPTTE (391 aa)) lie on the Cytoplasmic side of the membrane. D109 is a short sequence motif (D1). D171 is a short sequence motif (D2). Residue D364 is a short sequence motif, D3. The active-site Proton acceptor is D364. Residues 404–408 (RRVRW) carry the (Q/R)XXRW motif. The chain crosses the membrane as a helical span at residues 428–448 (SIICGIYGTYAISTVFFGTWF). The Lumenal portion of the chain corresponds to 449 to 451 (NKY). The helical transmembrane segment at 452–472 (WFVMHMLIWMLTDYVQYHTLI) threads the bilayer. Residues 473-501 (NHTLDVKNITYLPNWLNESIPPKQRNCLQ) lie on the Cytoplasmic side of the membrane. The chain crosses the membrane as a helical span at residues 502–522 (WGYIWILRELLALPIWIIAMI). Over 523–544 (GHEIDWRGRPFRIKKDLTAEEM) the chain is Lumenal.

Belongs to the glycosyltransferase 2 family.

The protein resides in the golgi apparatus membrane. The enzyme catalyses an N-acylsphing-4-enine + UDP-alpha-D-glucose = a beta-D-glucosyl-(1&lt;-&gt;1')-N-acylsphing-4-enine + UDP + H(+). Its pathway is lipid metabolism; sphingolipid metabolism. Functionally, catalyzes the final step in the biosynthesis of the membrane lipid glucosylceramide (GluCer), the transfer of glucose to ceramide. Glucosylceramides play important roles in growth, differentiation and pathogenicity. The protein is Ceramide glucosyltransferase of Candida albicans (strain SC5314 / ATCC MYA-2876) (Yeast).